The sequence spans 224 residues: MFLGLFQYTIDTVVKDVSKSVNLSLDAVQELELNVVPIRQASNVTGFLFTSVFVYFFALFKASSLRRNYIMLAARFAVVFLYCPLLYYCGALLDATIICCALIGRLCLVCFYSWRYKNALFIIFNTTTLSFLNGKAAYYDGKSIVILEGGDHYITFGNSFVAFVSNIDLYLAIRGRQEADLHLLRTVELLDGKKLYVFSQHQIVGITNAAFDSIQLDEYATISE.

Residues 34–124 (NVVPIRQASN…RYKNALFIIF (91 aa)) form the CoV 3a-like viroporin TM domain. 3 helical membrane-spanning segments follow: residues 40–60 (QASNVTGFLFTSVFVYFFALF), 69–88 (YIMLAARFAVVFLYCPLLYY), and 95–111 (ATIICCALIGRLCLVCF). Residues 128–203 (TLSFLNGKAA…KLYVFSQHQI (76 aa)) enclose the CoV 3a-like viroporin CD domain.

It localises to the host membrane. The protein is Non-structural protein 3 of Sus scrofa (Pig).